Consider the following 378-residue polypeptide: UPF0754 membrane protein SH1116 (378 aa).

The next 2 membrane-spanning stretches (helical) occupy residues 4–24 (FLVI…TNVI) and 358–378 (SLGF…AIFV).

It belongs to the UPF0754 family.

It is found in the cell membrane. This chain is UPF0754 membrane protein SH1116, found in Staphylococcus haemolyticus (strain JCSC1435).